The sequence spans 246 residues: Transcription factor A, mitochondrial (246 aa).

The transit peptide at 1 to 42 (MAFLRSMWGVLSALGRSGAELCTGCGSRLRSPFSFVYLPRWF) directs the protein to the mitochondrion. A DNA-binding region (HMG box 1) is located at residues 50–118 (PKKPVSSYLR…VYKEEISRFK (69 aa)). A phosphoserine; by PKA mark is found at Ser-55, Ser-56, and Ser-61. Position 122 is a phosphothreonine (Thr-122). Positions 155–219 (PKRPRSAYNV…RYHNEMKSWE (65 aa)) form a DNA-binding region, HMG box 2. Position 160 is a phosphoserine; by PKA (Ser-160). Ser-193 and Ser-195 each carry phosphoserine.

In terms of assembly, monomer; binds DNA as a monomer. Homodimer. Component of the mitochondrial transcription initiation complex, composed at least of TFB2M, TFAM and POLRMT. In this complex TFAM recruits POLRMT to the promoter whereas TFB2M induces structural changes in POLRMT to enable promoter opening and trapping of the DNA non-template strand. Upon metabolic stress, forms a complex composed of FOXO3, SIRT3, TFAM and POLRMT. Interacts with TFB1M and TFB2M. Interacts with CLPX; this enhances DNA-binding. Phosphorylation by PKA within the HMG box 1 impairs DNA binding and promotes degradation by the AAA+ Lon protease.

The protein localises to the mitochondrion. Its subcellular location is the mitochondrion matrix. It localises to the mitochondrion nucleoid. In terms of biological role, binds to the mitochondrial light strand promoter and functions in mitochondrial transcription regulation. Component of the mitochondrial transcription initiation complex, composed at least of TFB2M, TFAM and POLRMT that is required for basal transcription of mitochondrial DNA. In this complex, TFAM recruits POLRMT to a specific promoter whereas TFB2M induces structural changes in POLRMT to enable promoter opening and trapping of the DNA non-template strand. Required for accurate and efficient promoter recognition by the mitochondrial RNA polymerase. Promotes transcription initiation from the HSP1 and the light strand promoter by binding immediately upstream of transcriptional start sites. Is able to unwind DNA. Bends the mitochondrial light strand promoter DNA into a U-turn shape via its HMG boxes. Required for maintenance of normal levels of mitochondrial DNA. May play a role in organizing and compacting mitochondrial DNA. The protein is Transcription factor A, mitochondrial of Homo sapiens (Human).